Reading from the N-terminus, the 278-residue chain is Type II restriction enzyme NgoPII (278 aa).

This sequence belongs to the NgoPII type II restriction endonuclease family.

It catalyses the reaction Endonucleolytic cleavage of DNA to give specific double-stranded fragments with terminal 5'-phosphates.. A P subtype restriction enzyme that recognizes the double-stranded sequence 5'-GGCC-3' and cleaves after G-2. The sequence is that of Type II restriction enzyme NgoPII (ngoPIIR) from Neisseria gonorrhoeae.